Consider the following 793-residue polypeptide: Short transient receptor potential channel 1 (793 aa).

The segment at 1–30 (MMAALYPSTDLSGASSSSLPSSPSSSSPNE) is disordered. The Cytoplasmic portion of the chain corresponds to 1 to 345 (MMAALYPSTD…FGQMSGYRRK (345 aa)). Residues 15–28 (SSSSLPSSPSSSSP) are compositionally biased toward low complexity. ANK repeat units lie at residues 46–75 (LNEK…SGDL), 83–109 (LGRN…YGCQ), 111–156 (ADAL…EYST), and 158–180 (MDVA…MLLK). Positions 189, 193, 195, and 198 each coordinate Zn(2+). The segment at residues 346 to 379 (PTCKKIMTVLTVGIFWPVLSLCYLIAPKSQFGRI) is an intramembrane region (discontinuously helical). Over 380–386 (IHTPFMK) the chain is Cytoplasmic. The helical transmembrane segment at 387-404 (FIIHGASYFTFLLLLNLY) threads the bilayer. Residues 405–422 (SLVYHEDKKNTMGPALER) lie on the Extracellular side of the membrane. The helical transmembrane segment at 423 to 439 (IDYLLILWIIGMIWSDI) threads the bilayer. Over 440–455 (KRLWYEGLEDFLEESR) the chain is Cytoplasmic. The helical transmembrane segment at 456 to 475 (NQLSFVMNSLYLATFALKEE) threads the bilayer. The Extracellular portion of the chain corresponds to 476 to 496 (AHNKFHDFADRKDWDAFHPTL). The chain crosses the membrane as a helical span at residues 497–517 (VAEGLFAFANVLSYLRLFFYV). At 518–536 (YTSSILGPLQISMGRMLQD) the chain is on the cytoplasmic side. A helical membrane pass occupies residues 537 to 558 (FGKFLGMFLLVLFSFTIGLTQL). The Extracellular portion of the chain corresponds to 559-623 (YDKGYTPKEQ…GEELQSFVGA (65 aa)). An intrachain disulfide couples Cys-571 to Cys-576. Residues 624 to 644 (FIVGTYNVVVVIVLTKLLVAM) form a helical membrane-spanning segment. At 645-793 (LHKSFQLIAN…SKYAMFYPRN (149 aa)) the chain is on the cytoplasmic side.

This sequence belongs to the transient receptor (TC 1.A.4) family. STrpC subfamily. TRPC1 sub-subfamily. As to quaternary structure, heterotetramer with TRPC4 and/or TRPC5. Forms a heteromeric ion channel with TRPC4, with a 1:3 TRPC1:TRPC4 stoichiometry. Unlike other TRP channel proteins, does not form a homomeric channel. Interacts with TRPC4AP. Interacts with ITPR3. Interacts with MX1 and RNF24. Interacts with FKBP4. Interacts with PLSCR1. Interacts with PKD2L2. Forms a heterotetramer with PKD2 with a 2:2 stoichiometry; has distinct channel properties separate from PKD2 or TRPC1 homomers alone. Activation of PRKCA induces phosphorylation of TRPC1 and subsequent Ca2+ entry into cells.

It localises to the cell membrane. The catalysed reaction is Ca(2+)(in) = Ca(2+)(out). It catalyses the reaction Na(+)(in) = Na(+)(out). It carries out the reaction Li(+)(in) = Li(+)(out). The enzyme catalyses Cs(+)(in) = Cs(+)(out). Its activity is regulated as follows. May be operated by a phosphatidylinositol second messenger system activated by receptor tyrosine kinases or G-protein coupled receptors. Also activated by intracellular calcium store depletion. Its function is as follows. Forms a receptor-activated non-selective calcium permeant cation channel. Forms a heteromeric ion channel with TRPC4 or TRPC5 that has reduced calcium permeability compared to the homomeric TRPC4 or TRPC5 channel. Also permeable to monovalent ions including sodium, lithium and cesium ions. This is Short transient receptor potential channel 1 (TRPC1) from Bos taurus (Bovine).